Reading from the N-terminus, the 607-residue chain is BTB/POZ domain-containing protein DOT3 (607 aa).

The region spanning 52-121 is the BTB domain; it reads TDLSIQVNDI…CYNLPLDLNP (70 aa). The NPH3 domain maps to 211 to 487; that stretch reads RCLYNDIATL…VQINTQVLFS (277 aa). Tyr-428 bears the Phosphotyrosine mark. 2 disordered regions span residues 498–520 and 573–607; these read DKLP…SRDN and KSFQ…MSMS. Basic and acidic residues-rich tracts occupy residues 499–520 and 577–586; these read KLPE…SRDN and TKREDEETRE. The stretch at 511–563 forms a coiled coil; that stretch reads REDKRMSRDNEIIKTLKEELENVKKKMSELQSDYNELQQEYERLSSKQKSSHN.

The protein belongs to the NPH3 family. As to expression, expressed in emerging leaf primordia.

It participates in protein modification; protein ubiquitination. May act as a substrate-specific adapter of an E3 ubiquitin-protein ligase complex (CUL3-RBX1-BTB) which mediates the ubiquitination and subsequent proteasomal degradation of target proteins. Involved in leaf vasculature patterning. The sequence is that of BTB/POZ domain-containing protein DOT3 from Arabidopsis thaliana (Mouse-ear cress).